The chain runs to 65 residues: Weak toxin CM-13b (65 aa).

5 cysteine pairs are disulfide-bonded: Cys-3-Cys-24, Cys-6-Cys-11, Cys-17-Cys-42, Cys-46-Cys-57, and Cys-58-Cys-63.

Belongs to the three-finger toxin family. Ancestral subfamily. Orphan group II sub-subfamily. In terms of tissue distribution, expressed by the venom gland.

Its subcellular location is the secreted. Functionally, binds with low affinity to muscular (alpha-1-beta-1-delta-epsilon/CHRNA1-CHRNB1-CHRND-CHRNE) and very low affinity to neuronal (alpha-7/CHRNA7) nicotinic acetylcholine receptor (nAChR). The sequence is that of Weak toxin CM-13b from Naja annulifera (Banded Egyptian cobra).